A 150-amino-acid polypeptide reads, in one-letter code: Large ribosomal subunit protein bL9 (150 aa).

It belongs to the bacterial ribosomal protein bL9 family.

Binds to the 23S rRNA. The chain is Large ribosomal subunit protein bL9 from Methylibium petroleiphilum (strain ATCC BAA-1232 / LMG 22953 / PM1).